We begin with the raw amino-acid sequence, 493 residues long: Glutamyl-tRNA(Gln) amidotransferase subunit A (493 aa).

Catalysis depends on charge relay system residues Lys79 and Ser159. Catalysis depends on Ser183, which acts as the Acyl-ester intermediate.

This sequence belongs to the amidase family. GatA subfamily. As to quaternary structure, heterotrimer of A, B and C subunits.

The catalysed reaction is L-glutamyl-tRNA(Gln) + L-glutamine + ATP + H2O = L-glutaminyl-tRNA(Gln) + L-glutamate + ADP + phosphate + H(+). Allows the formation of correctly charged Gln-tRNA(Gln) through the transamidation of misacylated Glu-tRNA(Gln) in organisms which lack glutaminyl-tRNA synthetase. The reaction takes place in the presence of glutamine and ATP through an activated gamma-phospho-Glu-tRNA(Gln). This is Glutamyl-tRNA(Gln) amidotransferase subunit A from Brucella ovis (strain ATCC 25840 / 63/290 / NCTC 10512).